A 330-amino-acid chain; its full sequence is GTPase Obg (330 aa).

The Obg domain maps to 1-159 (MNFIDEVKIY…MWIHLSLKLL (159 aa)). The region spanning 160-327 (SDVGLVGLPN…IVKLALKIIK (168 aa)) is the OBG-type G domain. Residues 166–173 (GLPNAGKS), 191–195 (FTTLV), 212–215 (DIPG), 279–282 (NKCD), and 308–310 (STY) each bind GTP. Mg(2+) is bound by residues Ser-173 and Thr-193.

This sequence belongs to the TRAFAC class OBG-HflX-like GTPase superfamily. OBG GTPase family. As to quaternary structure, monomer. Mg(2+) is required as a cofactor.

The protein localises to the cytoplasm. An essential GTPase which binds GTP, GDP and possibly (p)ppGpp with moderate affinity, with high nucleotide exchange rates and a fairly low GTP hydrolysis rate. Plays a role in control of the cell cycle, stress response, ribosome biogenesis and in those bacteria that undergo differentiation, in morphogenesis control. The polypeptide is GTPase Obg (Rickettsia akari (strain Hartford)).